The chain runs to 158 residues: Trafficking protein particle complex subunit 6B (158 aa).

The protein belongs to the TRAPP small subunits family. BET3 subfamily. In terms of assembly, homodimer. Part of a TRAPP complex. Heterodimer with TRAPPC3. The heterodimer TRAPPC6B-TRAPPC3 interacts with TRAPPC1 likely providing a core for TRAPP complex formation.

The protein localises to the golgi apparatus. It is found in the cis-Golgi network. Its subcellular location is the endoplasmic reticulum. Its function is as follows. Component of a transport protein particle (TRAPP) complex that may function in specific stages of inter-organelle traffic. Specifically involved in the early development of neural circuitry, likely by controlling the frequency and amplitude of intracellular calcium transients implicated in the regulation of neuron differentiation and survival. In Bos taurus (Bovine), this protein is Trafficking protein particle complex subunit 6B.